The chain runs to 279 residues: MQNRYLPYGKMNQCENNYGGNDNILNNNNYNNDDRYNNYKNNNIIENNNYTYNNGGGSKNDKKNIQRNNNSNYNNNNNNNNNNNNNNNNNNNNNNNKNNNNNNYNYNKNNYNKKTYTYRGRVRKYATALFFISTDFILMDDIQIQLKKPIHFYQKYLLIHGNSDNGIKIVLPYKYIGEIKLERFETSFNLSFSTTVTTGRQSARYVIKSLKNEFLIDFKNDLSSVFGNVSFFETDHSLQEMYKQIQFPSQSQPSSFSSSSSSSSIQLSPSPSSSSSPKL.

2 disordered regions span residues 50–109 (YTYN…YNKN) and 249–279 (SQSQPSSFSSSSSSSSIQLSPSPSSSSSPKL). Residues 68 to 109 (NNNSNYNNNNNNNNNNNNNNNNNNNNNNNKNNNNNNYNYNKN) are compositionally biased toward low complexity.

This is an uncharacterized protein from Dictyostelium discoideum (Social amoeba).